Reading from the N-terminus, the 866-residue chain is Sphingomyelin phosphodiesterase 4 (866 aa).

A phosphoserine mark is found at serine 169 and serine 285. Threonine 708 bears the Phosphothreonine mark. Serine 792 bears the Phosphoserine mark. A helical transmembrane segment spans residues 822 to 842; that stretch reads LLLAFFVASLFCVGPLPCTLL.

The cofactor is Mg(2+). As to expression, widely expressed, with highest levels in heart and skeletal muscle. Expressed in skeletal muscle (at protein level). In terms of tissue distribution, expressed in skeletal muscle but a lower levels than isoform 1 (at protein level).

It is found in the endoplasmic reticulum membrane. It localises to the golgi apparatus membrane. The protein localises to the nucleus envelope. The protein resides in the cell membrane. Its subcellular location is the sarcolemma. The catalysed reaction is a sphingomyelin + H2O = phosphocholine + an N-acylsphing-4-enine + H(+). With respect to regulation, activated by phosphatidylserine and tumor necrosis factor (TNF). Inhibited by scyphostatin. Its function is as follows. Catalyzes the hydrolysis of membrane sphingomyelin to form phosphorylcholine and ceramide. It has a relevant role in the homeostasis of membrane sphingolipids, thereby influencing membrane integrity, and endoplasmic reticulum organization and function. May sensitize cells to DNA damage-induced apoptosis. In skeletal muscle, mediates TNF-stimulated oxidant production. In Homo sapiens (Human), this protein is Sphingomyelin phosphodiesterase 4.